The sequence spans 382 residues: Glutamine synthetase cytosolic isozyme (382 aa).

Residues 36-118 (GKICAEYVWI…VMCDCYEPPK (83 aa)) enclose the GS beta-grasp domain. One can recognise a GS catalytic domain in the interval 135-382 (TRFACAEVME…RLIVETTILL (248 aa)).

Belongs to the glutamine synthetase family. As to quaternary structure, homooctamer.

It is found in the cytoplasm. The catalysed reaction is L-glutamate + NH4(+) + ATP = L-glutamine + ADP + phosphate + H(+). The chain is Glutamine synthetase cytosolic isozyme (GLN1) from Chlamydomonas reinhardtii (Chlamydomonas smithii).